The following is a 387-amino-acid chain: GTPase Obg (387 aa).

The Obg domain occupies 1-159; that stretch reads MKFVDEAVIR…RSLRLELMLL (159 aa). One can recognise an OBG-type G domain in the interval 160 to 333; that stretch reads ADVGLLGMPN…LALKLMDFID (174 aa). Residues 166–173, 191–195, 213–216, 283–286, and 314–316 contribute to the GTP site; these read GMPNAGKS, FTTLV, DIPG, NKTD, and SAY. Mg(2+)-binding residues include S173 and T193.

It belongs to the TRAFAC class OBG-HflX-like GTPase superfamily. OBG GTPase family. As to quaternary structure, monomer. It depends on Mg(2+) as a cofactor.

The protein resides in the cytoplasm. Its function is as follows. An essential GTPase which binds GTP, GDP and possibly (p)ppGpp with moderate affinity, with high nucleotide exchange rates and a fairly low GTP hydrolysis rate. Plays a role in control of the cell cycle, stress response, ribosome biogenesis and in those bacteria that undergo differentiation, in morphogenesis control. This Shewanella loihica (strain ATCC BAA-1088 / PV-4) protein is GTPase Obg.